A 930-amino-acid chain; its full sequence is Isoleucine--tRNA ligase (930 aa).

The short motif at 57-67 (PYANGNIHVGH) is the 'HIGH' region element. Residue Glu554 coordinates L-isoleucyl-5'-AMP. The 'KMSKS' region signature appears at 595–599 (KMSKS). Residue Lys598 participates in ATP binding. Zn(2+) is bound by residues Cys888, Cys891, Cys908, and Cys911.

It belongs to the class-I aminoacyl-tRNA synthetase family. IleS type 1 subfamily. In terms of assembly, monomer. Zn(2+) serves as cofactor.

The protein resides in the cytoplasm. It carries out the reaction tRNA(Ile) + L-isoleucine + ATP = L-isoleucyl-tRNA(Ile) + AMP + diphosphate. Functionally, catalyzes the attachment of isoleucine to tRNA(Ile). As IleRS can inadvertently accommodate and process structurally similar amino acids such as valine, to avoid such errors it has two additional distinct tRNA(Ile)-dependent editing activities. One activity is designated as 'pretransfer' editing and involves the hydrolysis of activated Val-AMP. The other activity is designated 'posttransfer' editing and involves deacylation of mischarged Val-tRNA(Ile). The polypeptide is Isoleucine--tRNA ligase (Streptococcus mutans serotype c (strain ATCC 700610 / UA159)).